The following is a 554-amino-acid chain: Cytochrome P450 monooxygenase himC (554 aa).

A helical membrane pass occupies residues 52-72 (YSVASVAIAGFTALVVSVALY). N110, N328, N414, and N425 each carry an N-linked (GlcNAc...) asparagine glycan. Residue C501 coordinates heme.

Belongs to the cytochrome P450 family. It depends on heme as a cofactor.

The protein localises to the membrane. The protein operates within secondary metabolite biosynthesis. Its function is as follows. Cytochrome P450 monooxygenase; part of the him gene cluster that mediates the biosynthesis of himeic acid A, a ubiquitin-activating enzyme (E1) inhibitor. First, himA, together with the trans-enoyl reductase himH, catalyzes the formation of apolyketide chain, which is then condensed with leucine by the NRPS activity of himA. Dieckmann cyclization and release from himA gives a tetramic acid intermediate as the product of himA PKS-NRPS. HimG then catalyzes alpha-oxidation of the tetramic acid ring, with a subsequent rearrangement to yield apyrone intermediate. Two terminal methyl groups of polyketide and amide side chains are oxidized to carboxylic acids by himC cytochrome P450 monooxygenase to form himeic acid A. Himeic acid A is further converted to himeic acid B and C during culture growth. No gene responsible for pyrone to pyridone conversion was found in the him gene cluster and himeic acid A is non-enzymatically converted to himeic acid C by the incorporation of an ammonium nitrogen atom in a pH5 buffer, and to himeic acid B at a conversion ratio of 50% during incubation in MeOH for 5 days. The sequence is that of Cytochrome P450 monooxygenase himC from Aspergillus japonicus.